Consider the following 265-residue polypeptide: TATA-box-binding protein (265 aa).

Residues 1–40 (MYNPSQAVPVSLHKNQDNQDGGQQRSHYPQISSQQSQSYL) form a disordered region. Polar residues predominate over residues 18–29 (NQDGGQQRSHYP). 2 repeat units span residues 91-167 (LQNI…ARVV) and 181-258 (IQNM…YPIL).

It belongs to the TBP family. In terms of assembly, belongs to the TFIID complex together with the TBP-associated factors (TAFs). Binds DNA as monomer.

It is found in the nucleus. Its function is as follows. General transcription factor that functions at the core of the DNA-binding multiprotein factor TFIID. Binding of TFIID to the TATA box is the initial transcriptional step of the pre-initiation complex (PIC), playing a role in the activation of eukaryotic genes transcribed by RNA polymerase II. In Strongylocentrotus purpuratus (Purple sea urchin), this protein is TATA-box-binding protein.